Reading from the N-terminus, the 202-residue chain is Small ribosomal subunit protein uS4 (202 aa).

Positions Leu18 to Arg42 are disordered. In terms of domain architecture, S4 RNA-binding spans Asn90–Asn152.

Belongs to the universal ribosomal protein uS4 family. Part of the 30S ribosomal subunit. Contacts protein S5. The interaction surface between S4 and S5 is involved in control of translational fidelity.

In terms of biological role, one of the primary rRNA binding proteins, it binds directly to 16S rRNA where it nucleates assembly of the body of the 30S subunit. Its function is as follows. With S5 and S12 plays an important role in translational accuracy. This Synechococcus sp. (strain RCC307) protein is Small ribosomal subunit protein uS4.